Consider the following 620-residue polypeptide: Endoglucanase 21 (620 aa).

Residues 1–39 are disordered; that stretch reads MYGRDPWGGPLEINAADSMTDDDRSRNLQDLDRATPSRP. The Cytoplasmic segment spans residues 1 to 70; it reads MYGRDPWGGP…DLGCILVSRK (70 aa). The segment covering 21 to 39 has biased composition (basic and acidic residues); the sequence is DDDRSRNLQDLDRATPSRP. Residues 71–91 form a helical; Signal-anchor for type II membrane protein membrane-spanning segment; that stretch reads IFLWTLGTIVVTALLSGFITL. Residues 92–620 lie on the Extracellular side of the membrane; sequence IVKTLPHHHH…TPPPPAPWTP (529 aa). 2 N-linked (GlcNAc...) asparagine glycosylation sites follow: N108 and N134. D166 functions as the Nucleophile in the catalytic mechanism. N-linked (GlcNAc...) asparagine glycosylation is found at N217, N325, N346, N409, N426, and N482. Residues H514 and D561 contribute to the active site. A glycan (N-linked (GlcNAc...) asparagine) is linked at N567. The active site involves E570.

It belongs to the glycosyl hydrolase 9 (cellulase E) family. Expressed in conductive tissues of young roots, cotyledons, rosette leaves, cauline leaves and sepals. Expressed in the leaf trichome support cells.

It is found in the cell membrane. It catalyses the reaction Endohydrolysis of (1-&gt;4)-beta-D-glucosidic linkages in cellulose, lichenin and cereal beta-D-glucans.. In Arabidopsis thaliana (Mouse-ear cress), this protein is Endoglucanase 21 (KOR3).